The chain runs to 131 residues: Global transcriptional regulator Spx (131 aa).

C10 and C13 form a disulfide bridge.

It belongs to the ArsC family. Spx subfamily. Interacts with the C-terminal domain of the alpha subunit of the RNAP.

Its subcellular location is the cytoplasm. In terms of biological role, global transcriptional regulator that plays a key role in stress response and exerts either positive or negative regulation of genes. Acts by interacting with the C-terminal domain of the alpha subunit of the RNA polymerase (RNAP). This interaction can enhance binding of RNAP to the promoter region of target genes and stimulate their transcription, or block interaction of RNAP with activator. In Staphylococcus saprophyticus subsp. saprophyticus (strain ATCC 15305 / DSM 20229 / NCIMB 8711 / NCTC 7292 / S-41), this protein is Global transcriptional regulator Spx.